Consider the following 456-residue polypeptide: tRNA-2-methylthio-N(6)-dimethylallyladenosine synthase (456 aa).

The MTTase N-terminal domain maps to 13–129 (RYLYVRTFGC…IASLLEEVER (117 aa)). [4Fe-4S] cluster is bound by residues Cys-22, Cys-58, Cys-92, Cys-168, Cys-172, and Cys-175. One can recognise a Radical SAM core domain in the interval 154 to 384 (GTGDVVAQVT…QSIQADITLQ (231 aa)). A TRAM domain is found at 387–450 (LAETGTVREV…SHSLKGELLS (64 aa)).

It belongs to the methylthiotransferase family. MiaB subfamily. As to quaternary structure, monomer. It depends on [4Fe-4S] cluster as a cofactor.

It localises to the cytoplasm. The enzyme catalyses N(6)-dimethylallyladenosine(37) in tRNA + (sulfur carrier)-SH + AH2 + 2 S-adenosyl-L-methionine = 2-methylsulfanyl-N(6)-dimethylallyladenosine(37) in tRNA + (sulfur carrier)-H + 5'-deoxyadenosine + L-methionine + A + S-adenosyl-L-homocysteine + 2 H(+). Its function is as follows. Catalyzes the methylthiolation of N6-(dimethylallyl)adenosine (i(6)A), leading to the formation of 2-methylthio-N6-(dimethylallyl)adenosine (ms(2)i(6)A) at position 37 in tRNAs that read codons beginning with uridine. The chain is tRNA-2-methylthio-N(6)-dimethylallyladenosine synthase from Syntrophobacter fumaroxidans (strain DSM 10017 / MPOB).